The sequence spans 505 residues: AMP phosphorylase (505 aa).

Residues G170, 196–201, and T205 each bind AMP; that span reads SRAITS. D258 (proton donor) is an active-site residue. Residues S266 and K290 each coordinate AMP.

Belongs to the thymidine/pyrimidine-nucleoside phosphorylase family. Type 2 subfamily.

The catalysed reaction is AMP + phosphate = alpha-D-ribose 1,5-bisphosphate + adenine. It catalyses the reaction CMP + phosphate = cytosine + alpha-D-ribose 1,5-bisphosphate. The enzyme catalyses UMP + phosphate = alpha-D-ribose 1,5-bisphosphate + uracil. In terms of biological role, catalyzes the conversion of AMP and phosphate to adenine and ribose 1,5-bisphosphate (R15P). Exhibits phosphorylase activity toward CMP and UMP in addition to AMP. Functions in an archaeal AMP degradation pathway, together with R15P isomerase and RubisCO. The polypeptide is AMP phosphorylase (Methanococcus maripaludis (strain C7 / ATCC BAA-1331)).